Here is a 568-residue protein sequence, read N- to C-terminus: Kelch-like protein 12 (568 aa).

The BTB domain occupies 33–100 (CDVTLRVEQK…VYTETVHVTV (68 aa)). The 102-residue stretch at 135–236 (CLGIRDFAET…LTPRYITDVI (102 aa)) folds into the BACK domain. Kelch repeat units lie at residues 282-329 (VLLV…SLHD), 331-379 (IYVI…TLGD), 380-426 (MIYV…VASG), 427-473 (IIYC…LLND), 475-520 (IYVV…VLRG), and 522-567 (LYAI…VLRE). The segment at 405-568 (QWSMLGDMQT…DAGVCVLREK (164 aa)) is interaction with DVL3.

In terms of assembly, component of the BCR(KLHL12) E3 ubiquitin ligase complex, at least composed of CUL3 and KLHL12 and RBX1. This complex interacts with DVL3 upon activation of the Wnt signaling pathway by WNT3A. Interacts with DRD4, KLHL2 and SEC31A. Interacts with PEF1 and PDCD6/ALG-2; interaction takes place in response to cytosolic calcium increase and leads to bridge together the BCR(KLHL12) complex and SEC31 (SEC31A or SEC31B). Ubiquitinated by the SCF(FBXL17) complex, leading to its degradation by the proteasome: ubiquitination by the SCF(FBXL17) complex takes place when aberrant BTB domain dimers are formed.

It is found in the cytoplasmic vesicle. The protein resides in the COPII-coated vesicle. Its pathway is protein modification; protein ubiquitination. Substrate-specific adapter of a BCR (BTB-CUL3-RBX1) E3 ubiquitin ligase complex that acts as a negative regulator of Wnt signaling pathway and ER-Golgi transport. The BCR(KLHL12) complex is involved in ER-Golgi transport by regulating the size of COPII coats, thereby playing a key role in collagen export, which is required for embryonic stem (ES) cells division: BCR(KLHL12) acts by mediating monoubiquitination of SEC31 (SEC31A or SEC31B). The BCR(KLHL12) complex is also involved in neural crest specification: in response to cytosolic calcium increase, interacts with the heterodimer formed with PEF1 and PDCD6/ALG-2, leading to bridge together the BCR(KLHL12) complex and SEC31 (SEC31A or SEC31B), promoting monoubiquitination of SEC31 and subsequent collagen export. As part of the BCR(KLHL12) complex, also acts as a negative regulator of the Wnt signaling pathway by mediating ubiquitination and subsequent proteolysis of DVL3. The BCR(KLHL12) complex also mediates polyubiquitination of DRD4 and PEF1, without leading to degradation of these proteins. This chain is Kelch-like protein 12 (Klhl12), found in Rattus norvegicus (Rat).